The chain runs to 61 residues: Small ribosomal subunit protein uS14 (61 aa).

Zn(2+)-binding residues include C24, C27, C40, and C43.

It belongs to the universal ribosomal protein uS14 family. Zinc-binding uS14 subfamily. In terms of assembly, part of the 30S ribosomal subunit. Contacts proteins S3 and S10. Zn(2+) serves as cofactor.

Its function is as follows. Binds 16S rRNA, required for the assembly of 30S particles and may also be responsible for determining the conformation of the 16S rRNA at the A site. In Desulfovibrio desulfuricans (strain ATCC 27774 / DSM 6949 / MB), this protein is Small ribosomal subunit protein uS14.